A 1466-amino-acid chain; its full sequence is DNA-directed RNA polymerase subunit beta'' (1466 aa).

C220, C296, C303, and C306 together coordinate Zn(2+). The interval 618–725 is disordered; that stretch reads TREEDLEDEY…EDEYDSSEED (108 aa). 3 stretches are compositionally biased toward acidic residues: residues 621 to 631, 639 to 651, and 707 to 725; these read EDLEDEYETLE, DEYE…DEYG, and LEED…SEED.

The protein belongs to the RNA polymerase beta' chain family. RpoC2 subfamily. In plastids the minimal PEP RNA polymerase catalytic core is composed of four subunits: alpha, beta, beta', and beta''. When a (nuclear-encoded) sigma factor is associated with the core the holoenzyme is formed, which can initiate transcription. Zn(2+) serves as cofactor.

It is found in the plastid. It localises to the chloroplast. The enzyme catalyses RNA(n) + a ribonucleoside 5'-triphosphate = RNA(n+1) + diphosphate. DNA-dependent RNA polymerase catalyzes the transcription of DNA into RNA using the four ribonucleoside triphosphates as substrates. This chain is DNA-directed RNA polymerase subunit beta'', found in Agrostis stolonifera (Creeping bentgrass).